We begin with the raw amino-acid sequence, 71 residues long: Small ribosomal subunit protein bS21 (71 aa).

Belongs to the bacterial ribosomal protein bS21 family.

The chain is Small ribosomal subunit protein bS21 from Nitrosococcus oceani (strain ATCC 19707 / BCRC 17464 / JCM 30415 / NCIMB 11848 / C-107).